A 448-amino-acid polypeptide reads, in one-letter code: tRNA modification GTPase MnmE (448 aa).

The (6S)-5-formyl-5,6,7,8-tetrahydrofolate site is built by arginine 22, glutamate 79, and lysine 118. The region spanning 214-371 (GLHVVLAGQP…LRQELLRIAG (158 aa)) is the TrmE-type G domain. Position 224 (asparagine 224) interacts with K(+). GTP is bound by residues 224-229 (NVGKSS), 243-249 (TPIAGTT), and 268-271 (DTAG). Residue serine 228 participates in Mg(2+) binding. Residues threonine 243, isoleucine 245, and threonine 248 each coordinate K(+). Mg(2+) is bound at residue threonine 249. Lysine 448 provides a ligand contact to (6S)-5-formyl-5,6,7,8-tetrahydrofolate.

This sequence belongs to the TRAFAC class TrmE-Era-EngA-EngB-Septin-like GTPase superfamily. TrmE GTPase family. In terms of assembly, homodimer. Heterotetramer of two MnmE and two MnmG subunits. The cofactor is K(+).

The protein resides in the cytoplasm. Its function is as follows. Exhibits a very high intrinsic GTPase hydrolysis rate. Involved in the addition of a carboxymethylaminomethyl (cmnm) group at the wobble position (U34) of certain tRNAs, forming tRNA-cmnm(5)s(2)U34. This chain is tRNA modification GTPase MnmE, found in Dechloromonas aromatica (strain RCB).